A 509-amino-acid polypeptide reads, in one-letter code: Lysine--tRNA ligase (509 aa).

E395 and E402 together coordinate Mg(2+).

It belongs to the class-II aminoacyl-tRNA synthetase family. As to quaternary structure, homodimer. Mg(2+) is required as a cofactor.

The protein resides in the cytoplasm. The catalysed reaction is tRNA(Lys) + L-lysine + ATP = L-lysyl-tRNA(Lys) + AMP + diphosphate. This is Lysine--tRNA ligase from Fervidobacterium nodosum (strain ATCC 35602 / DSM 5306 / Rt17-B1).